A 68-amino-acid chain; its full sequence is U-scoloptoxin(02)-Er1a (68 aa).

A signal peptide spans 1–20; the sequence is MIVSLRCCLLLVALLITVET. Disulfide bonds link C30/C52, C38/C58, and C42/C60.

It belongs to the invertebrate defensin family. In terms of tissue distribution, expressed by the venom gland.

It localises to the secreted. Antibacterial peptide mostly active against Gram-positive bacteria. In Ethmostigmus rubripes (Giant centipede), this protein is U-scoloptoxin(02)-Er1a.